The chain runs to 338 residues: Anthranilate phosphoribosyltransferase (338 aa).

5-phospho-alpha-D-ribose 1-diphosphate contacts are provided by residues Gly81, 84 to 85 (GD), Thr89, 91 to 94 (NIST), 109 to 117 (KHGNRALSS), and Ala121. Residue Gly81 coordinates anthranilate. A Mg(2+)-binding site is contributed by Ser93. Asn112 contacts anthranilate. Arg167 is a binding site for anthranilate. 2 residues coordinate Mg(2+): Asp225 and Glu226.

The protein belongs to the anthranilate phosphoribosyltransferase family. As to quaternary structure, homodimer. It depends on Mg(2+) as a cofactor.

The catalysed reaction is N-(5-phospho-beta-D-ribosyl)anthranilate + diphosphate = 5-phospho-alpha-D-ribose 1-diphosphate + anthranilate. Its pathway is amino-acid biosynthesis; L-tryptophan biosynthesis; L-tryptophan from chorismate: step 2/5. Catalyzes the transfer of the phosphoribosyl group of 5-phosphorylribose-1-pyrophosphate (PRPP) to anthranilate to yield N-(5'-phosphoribosyl)-anthranilate (PRA). This is Anthranilate phosphoribosyltransferase from Rhizobium johnstonii (strain DSM 114642 / LMG 32736 / 3841) (Rhizobium leguminosarum bv. viciae).